Reading from the N-terminus, the 447-residue chain is Cysteine--tRNA ligase (447 aa).

A Zn(2+)-binding site is contributed by Cys28. Residues Pro30 to Asn40 carry the 'HIGH' region motif. The Zn(2+) site is built by Cys211, His236, and Glu240. The 'KMSKS' region motif lies at Lys268–Ser272. Residue Lys271 participates in ATP binding.

This sequence belongs to the class-I aminoacyl-tRNA synthetase family. Monomer. Zn(2+) is required as a cofactor.

It is found in the cytoplasm. The catalysed reaction is tRNA(Cys) + L-cysteine + ATP = L-cysteinyl-tRNA(Cys) + AMP + diphosphate. This chain is Cysteine--tRNA ligase, found in Streptococcus thermophilus (strain CNRZ 1066).